Here is a 310-residue protein sequence, read N- to C-terminus: Translocator protein BipD (310 aa).

Coiled-coil stretches lie at residues 127–171 and 250–299; these read DPIL…LQDY and DTAR…AIST.

It belongs to the invasin protein D family.

The protein localises to the secreted. Functionally, required for invasion of epithelial cells, as well as for survival within host cells, escape from endocytic vesicles and subsequent actin-tail formation. Probably regulates the secretion of effectors BipB and BipC and their final integration into the target cell membrane. The polypeptide is Translocator protein BipD (bipD) (Burkholderia thailandensis (strain ATCC 700388 / DSM 13276 / CCUG 48851 / CIP 106301 / E264)).